Consider the following 3214-residue polypeptide: MEMRLEVLTSTSIKQKKPWPRVSWLGQENEAVFLLDEKFINEINLLSGRTKKKIPSLQPLLKDVVFLATSTNDVWLSGVLTTGELFLWNKDQDCLKKIHVTEKPKEAIKAAVASSSRLYLYVAENGKRILLITSSGCILLWEYLELKNILSSKSLSLVGQWSQIVPEEAVSLPSTKDKEAVVAAVFVKNELLGDCCLCSFTFYSGECLKLTFLDIQWYENIFTSVRSLLFRVHWAQQECPLCSLIPRCASVKSRGALISAFSRDGLALAVTLNQKDPTATQVLFINTLNFVTLCGGLKGCSNKNPVVPATLTRSYWVGDISWTHDSLFLTCVLKRGSLVLLTCLGELLTLVTFGCSIEFGPAEFIPLHPLITYRPQQLPFQDSNNCVDSSASESDPLRQRFSIKAHSRLPYLIISDGYMVTTLRFLDNQSPTMLMRSLLLDSTQRLEKAYQSMMLSEPKDKGLNFRSLDSLRSSLLKHQGKESSVHCTVPRFLQAEETMKLNETTDFQDFEGEETNEVEQFVNNSFSFCNQKKDLPFDIVKEGRLEFASMFDTVHAKDASKETDRNTAELHRIQKTLLAAWTIGISKNVTEKKLMLNYTILCITHFFYILQFIKCPVPKFDLFLNKSLKRNAWVLCVFQLFHQCLSVHYWDMRYRQNMGHLIRLTANTVKLLLTQRQEHGSFSERLLACLSLLRTVTVHLNGTCSLQPEAVPAAADESRPAELDSLMVPIFQASKENWPWDSSLKIYPQVTNLVQKPGHRLIALWRLLYKKTLWYQAQLSQRTPDGDRRLTENIRHEVSVVKTLLCHVQTNLQMAGDSLNQALELTPISGEECFLLASYEKSVCLWKKALQETQEKGGRRTCFLQLRYYLSLLYCHLYCYNLNDAQGLCDHLVRELLSRSQLPVRESQDCSDCEIAVTGNVHPEAALRVVQCMARFMAAYFTNEPLFILPPHSVSVLPPLHVKTEHSLRLIPLQHSKVASVIRDQNLSNVWTVEYTLELLFIGGLIPEAVWMAHKLGDWKTSVSIGVAYQVFCKHDCNFARSKKKGMDLPLNMIPAQIFQEKLQCFLGQPVSLTKKNEKGSKYKQFTDPIEEEDASLLFGSVQEVLKASVMADADIVSETLQLLMDSAKDFSKKLWGLVPVDLYLPAPPLYCPQPAVLSEEHGDNLLLKAEKDNRQKLSGILQRVLLLFRASRCSFPVAQWYILQLRWARKVMQKIRVKGSLPSLGSFPESLLNYCKGGIAFFRPGATGDHTLDEVSIKALGCFRELCALCWMLHVRDKLSYTCRQYQKARENTKIEKDLEVGFDSCVVEHCFHALEWACRMLPFSRFFNMEELIQDIILSLIGELPPIRKVAEIFVKAFPNPEAIRVPLREKYHSLQQKLKHGVVKGPQTEELMSTVMRHVRKVRVKALKRVQRNIGAFEMDIWEPDEEDKPAATPAADRFSLGPSVSSTLTLDLGSSLLHSDADTFSETLSLEEKTWIHLYQRHTPSHMELALVGKKPSDKKKVSNQKENSQRKEDDETPGKEALPVIGVWEFERDDDEYISFLELFLSYILERDLCSSDPGIPFLTSFSGRLREHELNSLLFDVHTTLKRRQSKTISENVYRAGSCFAVTPESQEPENLSSLNSVGARHFESQALSASALGNQSGSTLENPLQSGSTSENPLQSDVMNWERRAGLFGLKQKPMYRVPDDKREKPTVQRSSNHSFWVPESIKPGRHRFRALEGSAGPPREDLPLALQSMFGDAGRLVEWMIRWSDRRLLCDPGVTPSSCKYSPVIRVKTSTAAILTSLWLLEQPYSAAYTAKNGIIKVLERHHTEPQVAAERESDVDADCPAAVAAQEGTECWNRMPAEAENHDVKDTGDEIAPVTPGSERELVHADGRHSEAGSSTQDEMDVHISDSEEGPVESLRGPSAVICRPESQLSSEHSEEEAQCSRKEPRDASVDTNLTEQKGAQISDLKEKSPTVLPLMSNGAQDTSQTPQKTQGNEHRAQLPDASESVRQMLQDEMFKLVQLQQINFLSLMQIVGPSVASLPDMHGLLQQAQSVRFGESQVSNSTKSDCIEVNSRQRVSARAQSMGECTREPGKNSPADHKRISRPDQDSSGDTQDIPHGSVPLCQLDGQPEVRGQTGAPRSFAPASFPPAPAADSGLQLLFTPAAIQKTPQLIPPARAGAPGRGFPLLHFQPKRDFKPLSLPVGRIPQVSFRPQAQPKEAWSLSDSCQPPVSQRTVHTTLPSPSDSSHCNAEAMRKAEAVLTGIPKHVNMGQYAGQGYLTPQQDSSVFIKPENVFDVKPSPPETALQNSFGLPLLHLQFKPPYVFSAPPRAFSRFPSVPGTEGRNQPQLSLLHPCLPPENTYKKPQLIPLENLLAFKRSQQKLAHSVSGQGDAAPHFVGVSMDAAGITQGKQRQSRRAKRELQEGRAQKPRRKPNVSFRPEDSLISNDSEVIIEPKEQLGHHDSQHLDKFDIPFEMLEDDINTSAGLHFMASVRKKAVGSHDASTNTDPDKEGPSQKADSESSKNPQATAASSGHEPLKVPQLLIPDIYLNVRLPSGIAEKPLSPSPPHMAGHKYIDVVDIEADDLLGLPACEEPSDEVTKQQSHPPHAPSSAELHCMAASIVDAAPPHTFQSQESASSTRGLISEPAKVTQSCQSGESWRKSVIEAKEPEIPSVAPPSDRQQDRDILEQNFQFKEQSTKLDSVGQSLLWTLLQNASPACPTPSPAVCPRPSSPACPPPSPAVCPPPSPAACPTPSPAAQKFEHLTAKLQEMDEQLVAVQTMAENIEQDFPASQVLNLHWEKAGLGNHVGLSSGPDIEKLLASKAISISEEVSLQTQEDVEEQKDAEETSETEFSEAENHSSQKTYACPSVGSAACSSVGWNIPSPGLNDSNELLESGSEDQLQVTGLTDIADIIGDLITKSGVSSHELGLTECQARSISRIQRPPDRGPRRTAEERREIKAWMRRKQKERMSEYLGQLAERRGRERNPFCPTSSPFYMTSRQIRQRQKMKREKDRLQLSKHYSQRLSQAYSLMNELLSDSAHITAPAENPLPPGPYRRQRGSSPKRENAHGQSLPVNRPGGDRHISRSSHLCKGQPRGSSQLRGSQPPCQSQKPLRSRGAAGVGPPVQQACREDEREEMVVSPWTLPSEIHRILHGRPESLLQDMSPADEEEPEPPLLAGGMDSVSESTGSILSKLDWKAVEDMVASVEDKNLSVHWALDQ.

A run of 2 helical transmembrane segments spans residues 593-613 (KLML…LQFI) and 632-652 (AWVL…YWDM). Disordered stretches follow at residues 1496–1523 (VGKK…ETPG), 1644–1667 (GNQS…PLQS), 1879–1991 (DGRH…HRAQ), 2047–2142 (FGES…FPPA), 2214–2241 (SLSD…SSHC), 2398–2440 (GITQ…ISND), 2491–2529 (GSHD…GHEP), 2622–2650 (TFQS…QSGE), 2824–2855 (VSLQ…HSSQ), 3037–3127 (TAPA…CRED), and 3158–3181 (MSPA…VSES). Over residues 1512–1523 (NSQRKEDDETPG) the composition is skewed to basic and acidic residues. Basic and acidic residues predominate over residues 1932–1942 (QCSRKEPRDAS). Polar residues-rich tracts occupy residues 1943-1953 (VDTNLTEQKGA), 1971-1984 (NGAQ…QKTQ), and 2047-2068 (FGES…SRQR). A compositionally biased stretch (basic and acidic residues) spans 2079–2099 (CTREPGKNSPADHKRISRPDQ). Polar residues predominate over residues 2215-2241 (LSDSCQPPVSQRTVHTTLPSPSDSSHC). Residues 2500 to 2514 (DPDKEGPSQKADSES) show a composition bias toward basic and acidic residues. Composition is skewed to polar residues over residues 2515 to 2524 (SKNPQATAAS) and 2622 to 2634 (TFQS…STRG). Residues 2830–2848 (EDVEEQKDAEETSETEFSE) are compositionally biased toward acidic residues. Residues 3090 to 3107 (RGSSQLRGSQPPCQSQKP) show a composition bias toward polar residues.

In terms of assembly, interacts with FUZ; INTU and WDPCP; the interactors are proposed to form the core CPLANE (ciliogenesis and planar polarity effectors) complex.

It localises to the membrane. It is found in the cell projection. The protein resides in the cilium. Functionally, involved in ciliogenesis. Involved in the establishment of cell polarity required for directional cell migration. Proposed to act in association with the CPLANE (ciliogenesis and planar polarity effectors) complex. Involved in recruitment of peripheral IFT-A proteins to basal bodies. The polypeptide is Ciliogenesis and planar polarity effector 1 (Mus musculus (Mouse)).